The primary structure comprises 541 residues: Phosphoenolpyruvate carboxykinase (ATP) (541 aa).

243–250 (GLSGTGKT) is an ATP binding site.

The protein belongs to the phosphoenolpyruvate carboxykinase (ATP) family.

The enzyme catalyses oxaloacetate + ATP = phosphoenolpyruvate + ADP + CO2. It functions in the pathway carbohydrate biosynthesis; gluconeogenesis. The chain is Phosphoenolpyruvate carboxykinase (ATP) (PCK1) from Eremothecium gossypii (strain ATCC 10895 / CBS 109.51 / FGSC 9923 / NRRL Y-1056) (Yeast).